Consider the following 279-residue polypeptide: Shikimate dehydrogenase (NADP(+)) (279 aa).

Shikimate-binding positions include Ser-21–Ser-23 and Thr-68. The active-site Proton acceptor is Lys-72. Positions 93 and 108 each coordinate shikimate. NADP(+) is bound by residues Gly-130–Ala-134 and Leu-219. Tyr-221 contacts shikimate. An NADP(+)-binding site is contributed by Gly-242.

Belongs to the shikimate dehydrogenase family. As to quaternary structure, homodimer.

It catalyses the reaction shikimate + NADP(+) = 3-dehydroshikimate + NADPH + H(+). It functions in the pathway metabolic intermediate biosynthesis; chorismate biosynthesis; chorismate from D-erythrose 4-phosphate and phosphoenolpyruvate: step 4/7. In terms of biological role, involved in the biosynthesis of the chorismate, which leads to the biosynthesis of aromatic amino acids. Catalyzes the reversible NADPH linked reduction of 3-dehydroshikimate (DHSA) to yield shikimate (SA). The polypeptide is Shikimate dehydrogenase (NADP(+)) (Oleidesulfovibrio alaskensis (strain ATCC BAA-1058 / DSM 17464 / G20) (Desulfovibrio alaskensis)).